A 159-amino-acid chain; its full sequence is MLHVLASLPLLLLLVTSASTHAWSRPLWYQVGLDLQPWGCQPKSVEGCRGGLSCPGYWLGPGASRIYPVAAVMITTTMLMICRKILQGRRRSQATKGEHPQVTTEPCGPWKRRAPISDHTLLRGVLHMLDALLVHIEGHLRHLATQRQIQIKGTSTQSG.

The N-terminal stretch at 1 to 24 (MLHVLASLPLLLLLVTSASTHAWS) is a signal peptide. Residues 25 to 63 (RPLWYQVGLDLQPWGCQPKSVEGCRGGLSCPGYWLGPGA) are Extracellular-facing. The chain crosses the membrane as a helical span at residues 64–86 (SRIYPVAAVMITTTMLMICRKIL). Residues 87–159 (QGRRRSQATK…QIKGTSTQSG (73 aa)) lie on the Cytoplasmic side of the membrane. The tract at residues 91-110 (RSQATKGEHPQVTTEPCGPW) is disordered.

It is found in the membrane. This Homo sapiens (Human) protein is Transmembrane protein 89 (TMEM89).